The chain runs to 54 residues: uncharacterized protein (54 aa).

The interval 34 to 54 is disordered; it reads NNREKQKSGKLRELRRGFKTF.

This is an uncharacterized protein from Acidianus two-tailed virus (ATV).